We begin with the raw amino-acid sequence, 185 residues long: MAQGHGDAKGTTAHTEAGGGHKAPFPPFQQETFASQLVSLAIAFVALYLIVSKIALPRVGGVIEERQKTIDGDLAAAQKLKGEADDALKAYEAELADARARAQAIGAETREKLNAQAEAERKTLEQRLAAKLADAEKTIATTRTAAMGNVRNIASDAASAIVQQLAGVTPDSKAVDSAVDASLKG.

Positions 1 to 26 (MAQGHGDAKGTTAHTEAGGGHKAPFP) are disordered. A helical membrane pass occupies residues 37–57 (LVSLAIAFVALYLIVSKIALP).

This sequence belongs to the ATPase B chain family. F-type ATPases have 2 components, F(1) - the catalytic core - and F(0) - the membrane proton channel. F(1) has five subunits: alpha(3), beta(3), gamma(1), delta(1), epsilon(1). F(0) has three main subunits: a(1), b(2) and c(10-14). The alpha and beta chains form an alternating ring which encloses part of the gamma chain. F(1) is attached to F(0) by a central stalk formed by the gamma and epsilon chains, while a peripheral stalk is formed by the delta and b chains.

Its subcellular location is the cell inner membrane. F(1)F(0) ATP synthase produces ATP from ADP in the presence of a proton or sodium gradient. F-type ATPases consist of two structural domains, F(1) containing the extramembraneous catalytic core and F(0) containing the membrane proton channel, linked together by a central stalk and a peripheral stalk. During catalysis, ATP synthesis in the catalytic domain of F(1) is coupled via a rotary mechanism of the central stalk subunits to proton translocation. Its function is as follows. Component of the F(0) channel, it forms part of the peripheral stalk, linking F(1) to F(0). The b'-subunit is a diverged and duplicated form of b found in plants and photosynthetic bacteria. In Rhodopseudomonas palustris (strain ATCC BAA-98 / CGA009), this protein is ATP synthase subunit b 2 (atpF2).